The following is an 801-amino-acid chain: PR domain zinc finger protein 4 (801 aa).

Positions 412–529 constitute an SET domain; sequence KQLVLRQSIV…PENELLFYYS (118 aa). A C2H2-type 1; atypical zinc finger spans residues 545-566; sequence HLCNCGKECNSYTEFKAHLTSH. 4 consecutive C2H2-type zinc fingers follow at residues 618 to 640, 646 to 668, 674 to 696, and 702 to 724; these read HKCD…LKIH, YRCT…MVIH, LKCD…VLIH, and IKCP…LNSH. The segment at 730 to 752 adopts a C2H2-type 6; atypical zinc-finger fold; sequence YVCEKCTKAYLTKYHLTRHLKTC. The segment at 751 to 782 is disordered; sequence TCKGPTSSSSAPEEEEEDDSEEEDLADSVGTE. The span at 762 to 776 shows a compositional bias: acidic residues; sequence PEEEEEDDSEEEDLA.

The protein belongs to the class V-like SAM-binding methyltransferase superfamily. As to expression, expressed in many tissues. Highly expressed in ovary, testis, pancreas, brain, heart and prostate.

Its subcellular location is the nucleus. Its function is as follows. May function as a transcription factor involved in cell differentiation. This Homo sapiens (Human) protein is PR domain zinc finger protein 4 (PRDM4).